The sequence spans 1741 residues: MEPNRRLRYFRSEIPQPVTEHRFPKRVEKLVFSVLSSNALMKLSEVQITTPILYEHYPSPATNGVLDKRLGLSDKVGKCATCGKDTKMCIGHFGTISLALPVFHPGLINDARTMLSIVCPFCSRVKISEADRLKYKVLNHKFSLAIVKEAQEQAKKQVNCPFCHAPSTICKKSQGFRVLREMHYEERATKILADVIKHQKDIEKIQELDQRLRNHVVDPIQALHILQKVPECDYPYLGIPWQSRNVYASQQTPDSIASNDASQLFSRGSSKLLARTASRFIAQHQGISDRATRLTSHAFLTRPQDVILTHIPVPPSCLRPSVQSGSGAGTTEDNLTSHLVRILTINDKLKEAMVSGAVATSKVYAKWDQLNMDVSLLYIGKIPGGVQPVKNKTDSGTKEGTGIIDRLKGKAGRFRSNLSGKRVNFSGRTVISPNPYLSMQQVAIPRLIAQNLTFPEIVTSRNIRFLRELILNGKTYPGANEVLLLNDTIRYNPALKRLGIDVKQSRDMEAKAMELVSRCVDTFNLNSLCADLPELQAAIQHLVSESSNAINSELKAEDLPQNQPLFAKEVYDPAQKGESNNIDNNVCEIDELKLEDTADYQVGESAGQASTVAVEQPPESRTVLKLNSIASLQLTNASSQHLSTFKLNTVSLLQKDRRGRQAIANSLRPNDIVYRHLLPNDTLLFNRQPSLHRMSIMQFNAVIHENRTFSFNPVVCSPFNADFDGDEMNIFYMQGQEARAEAGILMGSHENIISPRHGECMIGLTQDFLTGIYLLSGKGIFMTRQEYCQHVSYGCDGFGDATYGVSLYNYGREFIKSIHDRRGTEEDTVGFVKVPCLSQPCIVYPRQLYSGKQVLSVLMKGNDFDSVNINLEHGDKTYKKDSDRRALSVNDDYIIIQNSEHLVGRLTKTFLASSKNCIFYFLVQNYGPVSAARIMLRFAKVAARFLMNYGFTIGIDDVMPSQRVLGKKEVIVQEGYEKAQEKIRDYESGKLEAIPGSTVQETLEATLNQILSNVRESCAQIALKELHFTNKPLIMSLCGSKGSPINIAQMIIILGQQSFGGSRAPDDFYTRSTPYFYHYSKEPNAKGFILNSFYTGLLPFEFLAHARAGRDGVIDSACKTADTGYLQRRLVKCLEDLSVSYDFTVRNSKKSVVQFRFGHDGFDPIKLEVGTGQCFDLDTLLRHIILLNRSQDLAEGAFPVLLDRYKAEAELDVLLNKDFYGQEACLIERSNVTSYFQQSILPKLTTNTHIATTVAPALAASFLQTTLTKKDIDDFLRQVRRKYIRLNLEPGSPCGAVAAQSVGEPSTQMTLKSFHHAGLASMNITQGVPRLKEIVDGVVKISTPITTVELHVDVDKEELAATVTEKYLEKARMMKNIIECTYLGQISASIIECYSQSVCHIEVNLDMKIIADMGLAGIITVETVVASILHNDKAKKLVGQDQSSGSVSIHSATRFSVRPLTQSRDDLLFDIQSLKLLLPMIPVSGISTCSRAVINEYKEFCQGATSSAPLTKYNLLVEGIGLQNILNVSGIDFTRTLSNNIVEVANTLGIEAAVATISNEIKACMDSHGMAVDMRHIRLLADIMCFRGRVLGFTRFGLTKMKADSVIMLASFEKTGEHLFNAALGNKVDEANGVTESIILGKPMSMGTGSFSLLQAPYFDEKTGKTIEYQPKQTTRFLGEVLNKQYDEEVDAIVNAFWYDEKLYLTGAEAKAKLLRGRRHANKRSWSRGKERHASLKPKNR.

Residues Cys-79, Cys-82, Cys-89, His-92, Cys-119, Cys-122, and Cys-160 each coordinate Zn(2+). Residues Asp-722, Asp-724, and Asp-726 each coordinate Mg(2+). The interval 1099 to 1111 (PFEFLAHARAGRD) is bridging helix. Residues 1719-1741 (RHANKRSWSRGKERHASLKPKNR) are disordered.

Belongs to the RNA polymerase beta' chain family. As to quaternary structure, component of the RNA polymerase III (Pol III) complex consisting of 17 subunits.

The protein resides in the nucleus. It carries out the reaction RNA(n) + a ribonucleoside 5'-triphosphate = RNA(n+1) + diphosphate. DNA-dependent RNA polymerase catalyzes the transcription of DNA into RNA using the four ribonucleoside triphosphates as substrates. Largest and catalytic core component of RNA polymerase III which synthesizes small RNAs, such as 5S rRNA and tRNAs. Forms the polymerase active center together with the second largest subunit. A single-stranded DNA template strand of the promoter is positioned within the central active site cleft of Pol III. A bridging helix emanates from RPC1 and crosses the cleft near the catalytic site and is thought to promote translocation of Pol III by acting as a ratchet that moves the RNA-DNA hybrid through the active site by switching from straight to bent conformations at each step of nucleotide addition. This Giardia intestinalis (Giardia lamblia) protein is DNA-directed RNA polymerase III subunit RPC1 (RPOA3).